Consider the following 407-residue polypeptide: Venom metalloproteinase 3 (407 aa).

Residues asparagine 42, asparagine 91, asparagine 126, and asparagine 166 are each glycosylated (N-linked (GlcNAc...) asparagine). Residues 191 to 405 (FYPKLLVLVD…TSAACLKDTY (215 aa)) form the Peptidase M12B domain. Cystine bridges form between cysteine 317/cysteine 400 and cysteine 356/cysteine 384. Histidine 340 is a Zn(2+) binding site. Glutamate 341 is a catalytic residue. Positions 344 and 350 each coordinate Zn(2+). N-linked (GlcNAc...) asparagine glycosylation occurs at asparagine 391.

The protein in the C-terminal section; belongs to the venom metalloproteinase (M12B) family. In terms of assembly, monomer. It depends on Zn(2+) as a cofactor. Expressed by the venom gland.

The protein localises to the secreted. The gelatinase activity is inhibited by EDTA. Its function is as follows. The recombinant protein has gelatinase activity. In vivo, injection of this recombinant into fifth instar L.oleracea (host) larvae results in partial insect mortality associated with the molt to sixth instar, with surviving insects showing retarded development and growth. The protein is Venom metalloproteinase 3 of Eulophus pennicornis (Parasitoid wasp).